Consider the following 1291-residue polypeptide: Cytoplasmic FMR1-interacting protein (1291 aa).

The disordered stretch occupies residues 1270 to 1291 (PSVISSSSHYQDPQKLRQSINN). Residues 1271–1291 (SVISSSSHYQDPQKLRQSINN) are compositionally biased toward polar residues.

Belongs to the CYFIP family. Interacts with Fmr1 and Rac1. Component of the WAVE complex composed of Hem/Kette, Scar/Wave and Cyfip where it binds through its C-terminus directly to Hem. In the embryo, expressed mainly in the gut and in the developing central nervous system where high levels of expression are found in the CNS neuropile. Expression in the gut diminishes as development proceeds (at protein level). In the adult, expressed specifically in the nervous system.

The protein resides in the cytoplasm. In terms of biological role, plays a role in guidance and morphology of central and peripheral axons and in synaptic morphology. Also required for formation of cell membrane protrusions and for bristle development. Plays a role in regulating mitochondrial activity, energy metabolism and membrane potential which maintains normal gamma-aminobutyric acid (GABA) signaling and ensures normal social behavior. The chain is Cytoplasmic FMR1-interacting protein from Drosophila melanogaster (Fruit fly).